The sequence spans 374 residues: uncharacterized protein (374 aa).

The tract at residues 197-223 is disordered; it reads GTTTTTNNNNNNNNNNNNNNNNGTNIT. The span at 198–223 shows a compositional bias: low complexity; that stretch reads TTTTTNNNNNNNNNNNNNNNNGTNIT. Residues 302–342 adopt a coiled-coil conformation; the sequence is DEVSDCNDINTNLKKKRKQQEQLQIEKEKKLLTIQQEQTKI.

This is an uncharacterized protein from Dictyostelium discoideum (Social amoeba).